A 458-amino-acid chain; its full sequence is Cell death abnormality protein 8 (458 aa).

The Cytoplasmic segment spans residues 1–45 (MFLKKHKSKLLLVPRDEEQEDAGIVAVLTDRIPSVLLVRWFDLFC). A helical transmembrane segment spans residues 46–66 (FGFAMCSYALDFFSDIGIAIF). Topologically, residues 67–77 (HFWAGRYLSGS) are extracellular. A helical transmembrane segment spans residues 78–98 (LVLAFALLPSVIINIISMVWM). The Cytoplasmic segment spans residues 99–123 (LDDEMHWKRRAHPRRTGTFELNQKR). A helical transmembrane segment spans residues 124–144 (FIPLSKMIVLCICQMGPLFWY). The Extracellular segment spans residues 145–219 (YKALYYGWMF…YYQTGTYPYW (75 aa)). The chain crosses the membrane as a helical span at residues 220–240 (LYFQAASLLLSIISISWSVVV). Over 241-274 (QNRSLRMIRDDKVNIWPHEAVLQFCWRFLTILAR) the chain is Cytoplasmic. Helical transmembrane passes span 275–295 (IITLVALVLIFGINVVPLISV) and 296–316 (HLLVTLVHVIFLQAIHIDACT). Position 317 (histidine 317) is a topological domain, extracellular. The helical transmembrane segment at 318 to 338 (IEKLLLLINTFIHIFIPFNMV) threads the bilayer. Over 339 to 353 (EGNTRWRYLTAYSVE) the chain is Cytoplasmic. The chain crosses the membrane as a helical span at residues 354–374 (FIEMMLVCWLLPLSLNTFPYI). Residues 375-378 (EKVQ) lie on the Extracellular side of the membrane. Residues 379-399 (VGVPISFIAGIAIMMMYYQFF) traverse the membrane as a helical segment. At 400 to 458 (HPNRRQLIVTQSQEDLSLNVQKSVETLTPKLESSLEISGEQNTSQDLVSELLLDVEHEN) the chain is on the cytoplasmic side.

This sequence belongs to the XK family. Post-translationally, cleavage by ced-3 activates ced-8 function in promoting phosphatidylserine exposure at the surface of apoptotic cells.

It is found in the cell membrane. It catalyses the reaction a 1,2-diacyl-sn-glycero-3-phospho-L-serine(in) = a 1,2-diacyl-sn-glycero-3-phospho-L-serine(out). Functionally, phospholipid scramblase that acts downstream of ced-9 and caspase ced-3 to promote phosphatidylserine exposure on apoptotic cell surface. Phosphatidylserine is a specific marker only present at the surface of apoptotic cells and acts as a specific signal for engulfment. Regulates apoptosis kinetics during embryonic development. Not required for engulfment of germ cell corpses. The chain is Cell death abnormality protein 8 from Caenorhabditis elegans.